The chain runs to 1048 residues: NACHT, LRR and PYD domains-containing protein 8 (1048 aa).

A disordered region spans residues 1–23; sequence MSDVNPPSDTPIPFSSSSTHSSH. Over residues 11–23 the composition is skewed to low complexity; the sequence is PIPFSSSSTHSSH. The region spanning 33-131 is the Pyrin domain; that stretch reads PGSPCENGVM…NAILPTLEPE (99 aa). The region spanning 204–527 is the NACHT domain; it reads KTVAIQGAPG…FYVLCFPQRL (324 aa). ATP is bound at residue 210-217; that stretch reads GAPGIGKT. LRR repeat units lie at residues 815–838, 839–861, 866–890, 923–950, and 980–1007; these read NGHL…YLSV, AQLE…SLAS, SKML…IWNA, NKTL…ALKN, and NQHL…AFSS. A disordered region spans residues 1029 to 1048; it reads PTPHPPDFTGKSDCLSQINP.

Belongs to the NLRP family.

It is found in the cytoplasm. Its function is as follows. Involved in inflammation. This chain is NACHT, LRR and PYD domains-containing protein 8 (NLRP8), found in Homo sapiens (Human).